Reading from the N-terminus, the 352-residue chain is DNA polymerase IV (352 aa).

In terms of domain architecture, UmuC spans 4-185 (IIHVDMDCFY…LPLEKIPGVG (182 aa)). Residues Asp8 and Asp103 each coordinate Mg(2+). Glu104 is an active-site residue.

Belongs to the DNA polymerase type-Y family. Monomer. Mg(2+) serves as cofactor.

Its subcellular location is the cytoplasm. The enzyme catalyses DNA(n) + a 2'-deoxyribonucleoside 5'-triphosphate = DNA(n+1) + diphosphate. Its function is as follows. Poorly processive, error-prone DNA polymerase involved in untargeted mutagenesis. Copies undamaged DNA at stalled replication forks, which arise in vivo from mismatched or misaligned primer ends. These misaligned primers can be extended by PolIV. Exhibits no 3'-5' exonuclease (proofreading) activity. May be involved in translesional synthesis, in conjunction with the beta clamp from PolIII. The protein is DNA polymerase IV of Pectobacterium atrosepticum (strain SCRI 1043 / ATCC BAA-672) (Erwinia carotovora subsp. atroseptica).